A 622-amino-acid chain; its full sequence is Kinesin light chain 2 (622 aa).

Positions 78-143 (ILALSSHLGA…KQHLLFMSQI (66 aa)) form a coiled coil. Positions 145–164 (KLDEDASPNEEKGDVPKDTL) are enriched in basic and acidic residues. A disordered region spans residues 145 to 191 (KLDEDASPNEEKGDVPKDTLDDLFPNEDEQSPAPSPGGGDVSGQHGG). A phosphoserine mark is found at Ser-151, Ser-175, and Ser-179. Gly residues predominate over residues 180 to 190 (PGGGDVSGQHG). TPR repeat units lie at residues 198-231 (LRTL…LEKT), 240-273 (ATML…REKT), 282-315 (AATL…REKV), 324-357 (AKQL…YATR), and 366-399 (AKTK…AHEK). Ser-445 is subject to Phosphoserine. One copy of the TPR 6 repeat lies at 449–482 (NTTLRSLGALYRRQGKLEAAHTLEDCASRNRKQG). Disordered regions lie at residues 476-548 (SRNR…SFGK) and 563-622 (KLQG…SLVG). Basic and acidic residues predominate over residues 493–509 (ELLKDGSGRRGDRRSSR). A phosphoserine mark is found at Ser-508 and Ser-521. A compositionally biased stretch (low complexity) spans 538–547 (GSLRRSGSFG). Ser-581, Ser-582, Ser-589, Ser-608, Ser-610, and Ser-615 each carry phosphoserine. Residues 601–622 (LSDSRTLSSSSMDLSRRSSLVG) show a composition bias toward low complexity.

This sequence belongs to the kinesin light chain family. Oligomeric complex composed of two heavy chains and two light chains. Interacts (via TPR repeats) with PLEKHM2.

The protein localises to the cytoplasm. It is found in the cytoskeleton. The protein resides in the lysosome membrane. In terms of biological role, kinesin is a microtubule-associated force-producing protein that plays a role in organelle transport. The light chain functions in coupling of cargo to the heavy chain or in the modulation of its ATPase activity. Through binding with PLEKHM2 and ARL8B, recruits kinesin-1 to lysosomes and hence direct lysosomes movement toward microtubule plus ends. In Homo sapiens (Human), this protein is Kinesin light chain 2.